Here is a 179-residue protein sequence, read N- to C-terminus: uncharacterized protein (179 aa).

Residues 1 to 15 (MQRQTGHMEDKKRTG) are compositionally biased toward basic and acidic residues. Residues 1–32 (MQRQTGHMEDKKRTGLESQGTENAFSDGRDGK) are disordered.

This is an uncharacterized protein from Gallus gallus (Chicken).